The chain runs to 296 residues: Endochitinase 3 (296 aa).

The GH18 domain occupies 12-296 (HKLTVYWGAE…VKNGQLPEED (285 aa)). N-linked (GlcNAc...) asparagine glycosylation is found at Asn-32 and Asn-152. The Proton donor role is filled by Glu-153. Asn-228 is a glycosylation site (N-linked (GlcNAc...) asparagine).

Belongs to the glycosyl hydrolase 18 family. Chitinase class III subfamily.

The protein localises to the secreted. The enzyme catalyses Random endo-hydrolysis of N-acetyl-beta-D-glucosaminide (1-&gt;4)-beta-linkages in chitin and chitodextrins.. Functionally, secreted chitinase involved in the degradation of chitin, a component of the cell walls of fungi and exoskeletal elements of some animals (including worms and arthropods). Participates in the infection process and directly acts in the penetration process of the host cuticle. Involved in heat-shock adaptation. The polypeptide is Endochitinase 3 (chi3) (Metarhizium anisopliae (Entomophthora anisopliae)).